Consider the following 237-residue polypeptide: Demethylmenaquinone methyltransferase (237 aa).

S-adenosyl-L-methionine-binding positions include Thr58, Asp79, and 106–107; that span reads NA.

This sequence belongs to the class I-like SAM-binding methyltransferase superfamily. MenG/UbiE family.

The enzyme catalyses a 2-demethylmenaquinol + S-adenosyl-L-methionine = a menaquinol + S-adenosyl-L-homocysteine + H(+). It functions in the pathway quinol/quinone metabolism; menaquinone biosynthesis; menaquinol from 1,4-dihydroxy-2-naphthoate: step 2/2. Functionally, methyltransferase required for the conversion of demethylmenaquinol (DMKH2) to menaquinol (MKH2). This chain is Demethylmenaquinone methyltransferase, found in Listeria monocytogenes serotype 4a (strain HCC23).